Reading from the N-terminus, the 276-residue chain is SRR1-like protein (276 aa).

Ser30 carries the post-translational modification Phosphoserine. The residue at position 34 (Tyr34) is a Phosphotyrosine.

This sequence belongs to the SRR1 family.

Functionally, possible regulator involved in a circadian clock input pathway. The protein is SRR1-like protein of Drosophila melanogaster (Fruit fly).